The chain runs to 437 residues: Phosphatidylserine decarboxylase proenzyme 1, mitochondrial (437 aa).

Residues 1–18 constitute a mitochondrion transit peptide; the sequence is MLKFHRNVKPQFGAFARY. Topologically, residues 19 to 38 are mitochondrial matrix; that stretch reads SSLGKHNSRKRVGIIRLAYG. Residues 39-57 traverse the membrane as a helical segment; that stretch reads LTGIGLVGLAGFAWAQDRH. The Mitochondrial intermembrane segment spans residues 58-437; it reads EKTYQKKGVQ…PLGRVVPSSH (380 aa). Catalysis depends on charge relay system; for autoendoproteolytic cleavage activity residues aspartate 157, histidine 287, and serine 401. The Schiff-base intermediate with substrate; via pyruvic acid; for decarboxylase activity role is filled by serine 401. Serine 401 carries the pyruvic acid (Ser); by autocatalysis modification.

Belongs to the phosphatidylserine decarboxylase family. PSD-B subfamily. Eukaryotic type I sub-subfamily. In terms of assembly, heterodimer of a large membrane-associated beta subunit and a small pyruvoyl-containing alpha subunit. The cofactor is pyruvate. Post-translationally, is synthesized initially as an inactive proenzyme. Formation of the active enzyme involves a self-maturation process in which the active site pyruvoyl group is generated from an internal serine residue via an autocatalytic post-translational modification. Two non-identical subunits are generated from the proenzyme in this reaction, and the pyruvate is formed at the N-terminus of the alpha chain, which is derived from the carboxyl end of the proenzyme. The autoendoproteolytic cleavage occurs by a canonical serine protease mechanism, in which the side chain hydroxyl group of the serine supplies its oxygen atom to form the C-terminus of the beta chain, while the remainder of the serine residue undergoes an oxidative deamination to produce ammonia and the pyruvoyl prosthetic group on the alpha chain. During this reaction, the Ser that is part of the protease active site of the proenzyme becomes the pyruvoyl prosthetic group, which constitutes an essential element of the active site of the mature decarboxylase.

Its subcellular location is the mitochondrion. The protein localises to the mitochondrion inner membrane. The enzyme catalyses a 1,2-diacyl-sn-glycero-3-phospho-L-serine + H(+) = a 1,2-diacyl-sn-glycero-3-phosphoethanolamine + CO2. Its pathway is phospholipid metabolism; phosphatidylethanolamine biosynthesis; phosphatidylethanolamine from CDP-diacylglycerol: step 2/2. Catalyzes the formation of phosphatidylethanolamine (PtdEtn) from phosphatidylserine (PtdSer). Plays a central role in phospholipid metabolism and in the interorganelle trafficking of phosphatidylserine. Together with psd2 and psd3, responsible for the majority of phosphatidylethanolamine synthesis. In Schizosaccharomyces pombe (strain 972 / ATCC 24843) (Fission yeast), this protein is Phosphatidylserine decarboxylase proenzyme 1, mitochondrial.